The following is a 629-amino-acid chain: MRRPKKYESGEATQYISRRAALRKLQLSLNDFRRLCILKGVYPREPKHRRRAQKGSSEIKVLYHTKDIRFLLHESIVWTLRDYKIFAKKSNRDRAIKDFRNLKRRLALFPEIKLDHIVKERYPTFIDALKDLDDCLTLLFLFSTFPSLHLIPREQSNLCRRLTIEFLHYVIASKSLRKVFISIKGYYFQAEIKGQKVTWIVPHYYPFKPQSRQEVDFKVMSIFVEFYTIMLGFTNFRLFHGLNLAYPPQFPSSVLQDSEESLKDEASFVSDRIAALNFELLRTDKVQEDEEELDIDMELLEQDGDSKRIIKMKQEAQEVSRLRTLFKGLKFFINREVPREPLVILIRSFGGKVSWDSSIFAGSTYDEGDETITHQIVDRPSITTQYISRDYIQPQWVFDCVNQRQLLPTNKYFIGETLPPHLSPFVDSKRDSYIPPEEKALLDPSLIETHAQSDEDSEDEAEKEEEETVDQELLDAQLQLAYQQETAEYKKYGGPDGVNEDEEDPEDDDEDDDEEEAEEEELDEKSKRLQEEKQKMSVQSGKVHKVNKRQVHKAEVDEHRLQARMVKPRHRNLFRKLIREKQTKEKEEWLLRKKRRTIEASEKEARKTAKREARKEAAAAAAKASKLGK.

A BRCT domain is found at 321–414 (RLRTLFKGLK…QLLPTNKYFI (94 aa)). Disordered stretches follow at residues 439-470 (KALL…ETVD), 488-568 (EYKK…MVKP), and 598-629 (IEAS…KLGK). Residues Ser-453 and Ser-457 each carry the phosphoserine modification. 2 stretches are compositionally biased toward acidic residues: residues 454–470 (DEDS…ETVD) and 498–523 (VNED…EELD). A compositionally biased stretch (basic and acidic residues) spans 524 to 535 (EKSKRLQEEKQK). Positions 542-551 (KVHKVNKRQV) are enriched in basic residues. Composition is skewed to basic and acidic residues over residues 552–561 (HKAEVDEHRL) and 598–617 (IEAS…RKEA). Residues 584–627 (KEKEEWLLRKKRRTIEASEKEARKTAKREARKEAAAAAAKASKL) adopt a coiled-coil conformation. Low complexity predominate over residues 618–629 (AAAAAKASKLGK).

Belongs to the pescadillo family.

Its subcellular location is the nucleus. It localises to the nucleolus. It is found in the nucleoplasm. Its function is as follows. Required for maturation of ribosomal RNAs and formation of the large ribosomal subunit. The sequence is that of Pescadillo homolog from Drosophila erecta (Fruit fly).